Reading from the N-terminus, the 632-residue chain is 1-deoxy-D-xylulose-5-phosphate synthase (632 aa).

Thiamine diphosphate is bound by residues His-87 and 128–130 (GHS). A Mg(2+)-binding site is contributed by Asp-159. Thiamine diphosphate contacts are provided by residues 160–161 (GA), Asn-188, Phe-295, and Glu-377. Asn-188 contacts Mg(2+).

The protein belongs to the transketolase family. DXPS subfamily. Homodimer. Mg(2+) is required as a cofactor. The cofactor is thiamine diphosphate.

It carries out the reaction D-glyceraldehyde 3-phosphate + pyruvate + H(+) = 1-deoxy-D-xylulose 5-phosphate + CO2. The protein operates within metabolic intermediate biosynthesis; 1-deoxy-D-xylulose 5-phosphate biosynthesis; 1-deoxy-D-xylulose 5-phosphate from D-glyceraldehyde 3-phosphate and pyruvate: step 1/1. In terms of biological role, catalyzes the acyloin condensation reaction between C atoms 2 and 3 of pyruvate and glyceraldehyde 3-phosphate to yield 1-deoxy-D-xylulose-5-phosphate (DXP). This Stutzerimonas stutzeri (strain A1501) (Pseudomonas stutzeri) protein is 1-deoxy-D-xylulose-5-phosphate synthase.